The primary structure comprises 339 residues: Ketol-acid reductoisomerase (NADP(+)) (339 aa).

A KARI N-terminal Rossmann domain is found at 1–182 (MRVYYDRDAD…GGGRAGIIET (182 aa)). NADP(+)-binding positions include 24–27 (YGSQ), Arg-48, Ser-51, Thr-53, and 83–86 (DELQ). The active site involves His-108. An NADP(+)-binding site is contributed by Gly-134. In terms of domain architecture, KARI C-terminal knotted spans 183–328 (SFKEECETDL…AKLREMMPWI (146 aa)). Mg(2+)-binding residues include Asp-191, Glu-195, Glu-227, and Glu-231. A substrate-binding site is contributed by Ser-252.

This sequence belongs to the ketol-acid reductoisomerase family. Mg(2+) serves as cofactor.

It carries out the reaction (2R)-2,3-dihydroxy-3-methylbutanoate + NADP(+) = (2S)-2-acetolactate + NADPH + H(+). It catalyses the reaction (2R,3R)-2,3-dihydroxy-3-methylpentanoate + NADP(+) = (S)-2-ethyl-2-hydroxy-3-oxobutanoate + NADPH + H(+). The protein operates within amino-acid biosynthesis; L-isoleucine biosynthesis; L-isoleucine from 2-oxobutanoate: step 2/4. It functions in the pathway amino-acid biosynthesis; L-valine biosynthesis; L-valine from pyruvate: step 2/4. In terms of biological role, involved in the biosynthesis of branched-chain amino acids (BCAA). Catalyzes an alkyl-migration followed by a ketol-acid reduction of (S)-2-acetolactate (S2AL) to yield (R)-2,3-dihydroxy-isovalerate. In the isomerase reaction, S2AL is rearranged via a Mg-dependent methyl migration to produce 3-hydroxy-3-methyl-2-ketobutyrate (HMKB). In the reductase reaction, this 2-ketoacid undergoes a metal-dependent reduction by NADPH to yield (R)-2,3-dihydroxy-isovalerate. This is Ketol-acid reductoisomerase (NADP(+)) from Rhodopseudomonas palustris (strain BisB5).